The sequence spans 369 residues: Glutamate 5-kinase (369 aa).

K8 contacts ATP. S49, D136, and N148 together coordinate substrate. ATP is bound by residues 168–169 and 211–217; these read TD and TGGMATK. One can recognise a PUA domain in the interval 276–354; the sequence is TGKLYLDSGA…DEISQILGYG (79 aa).

Belongs to the glutamate 5-kinase family.

It localises to the cytoplasm. The catalysed reaction is L-glutamate + ATP = L-glutamyl 5-phosphate + ADP. It functions in the pathway amino-acid biosynthesis; L-proline biosynthesis; L-glutamate 5-semialdehyde from L-glutamate: step 1/2. Its function is as follows. Catalyzes the transfer of a phosphate group to glutamate to form L-glutamate 5-phosphate. The protein is Glutamate 5-kinase of Rippkaea orientalis (strain PCC 8801 / RF-1) (Cyanothece sp. (strain PCC 8801)).